A 204-amino-acid polypeptide reads, in one-letter code: Somatotropin (204 aa).

An N-terminal signal peptide occupies residues 1–17 (MERAVLLLSLLSLGVSS). Pyrrolidone carboxylic acid is present on Gln-18. His-36 contacts Zn(2+). An intrachain disulfide couples Cys-69 to Cys-177. Glu-186 provides a ligand contact to Zn(2+). A disulfide bridge links Cys-194 with Cys-202.

Belongs to the somatotropin/prolactin family.

It is found in the secreted. Functionally, growth hormone plays an important role in growth control and involved in the regulation of several anabolic processes. The sequence is that of Somatotropin (gh) from Perca flavescens (American yellow perch).